The primary structure comprises 343 residues: 3-oxopimeloyl-[acyl-carrier-protein] synthase (343 aa).

Catalysis depends on residues Cys132 and His272. An ACP-binding region spans residues 273–277 (QANHR). Asn302 is a catalytic residue.

This sequence belongs to the thiolase-like superfamily. BioZ family.

The enzyme catalyses malonyl-[ACP] + an acyl-CoA + H(+) = a 3-oxoacyl-[ACP] + CO2 + CoA. The catalysed reaction is glutaryl-CoA + malonyl-[ACP] + H(+) = 3-oxo-6-carboxyhexanoyl-[ACP] + CO2 + CoA. It participates in cofactor biosynthesis; biotin biosynthesis. Its function is as follows. Involved in the formation of the biotin precursor pimeloyl-ACP. Catalyzes the condensation of glutaryl-CoA, an intermediate in lysine degradation, with malonyl-ACP to produce 3-oxopimeloyl-ACP. This chain is 3-oxopimeloyl-[acyl-carrier-protein] synthase, found in Rhodothermus marinus (strain ATCC 43812 / DSM 4252 / R-10) (Rhodothermus obamensis).